Here is a 146-residue protein sequence, read N- to C-terminus: Small ribosomal subunit protein uS13A (146 aa).

N-acetylserine is present on S2. K36 participates in a covalent cross-link: Glycyl lysine isopeptide (Lys-Gly) (interchain with G-Cter in ubiquitin). N6-methyllysine; by RKM1 is present on K48. Glycyl lysine isopeptide (Lys-Gly) (interchain with G-Cter in ubiquitin) cross-links involve residues K49, K80, and K96.

The protein belongs to the universal ribosomal protein uS13 family. In terms of assembly, component of the small ribosomal subunit (SSU). Mature yeast ribosomes consist of a small (40S) and a large (60S) subunit. The 40S small subunit contains 1 molecule of ribosomal RNA (18S rRNA) and 33 different proteins (encoded by 57 genes). The large 60S subunit contains 3 rRNA molecules (25S, 5.8S and 5S rRNA) and 46 different proteins (encoded by 81 genes). Post-translationally, N-terminally acetylated by acetyltransferase NatA.

The protein resides in the cytoplasm. Component of the ribosome, a large ribonucleoprotein complex responsible for the synthesis of proteins in the cell. The small ribosomal subunit (SSU) binds messenger RNAs (mRNAs) and translates the encoded message by selecting cognate aminoacyl-transfer RNA (tRNA) molecules. The large subunit (LSU) contains the ribosomal catalytic site termed the peptidyl transferase center (PTC), which catalyzes the formation of peptide bonds, thereby polymerizing the amino acids delivered by tRNAs into a polypeptide chain. The nascent polypeptides leave the ribosome through a tunnel in the LSU and interact with protein factors that function in enzymatic processing, targeting, and the membrane insertion of nascent chains at the exit of the ribosomal tunnel. This Saccharomyces cerevisiae (strain ATCC 204508 / S288c) (Baker's yeast) protein is Small ribosomal subunit protein uS13A.